Reading from the N-terminus, the 119-residue chain is Putative mating-type protein A2 (119 aa).

The homeobox; TALE-type DNA-binding region spans 38–100; the sequence is KPYRGHRFTK…NRRRKEKTIT (63 aa).

The protein belongs to the TALE/M-ATYP homeobox family.

Its subcellular location is the nucleus. In terms of biological role, probably not a functional protein. Cells lacking A2 show no obvious alterations in mating, sporulation and cell growth. This Saccharomyces cerevisiae (Baker's yeast) protein is Putative mating-type protein A2 (MATA2).